The following is a 383-amino-acid chain: MATETVGIREIDTGALPDRYARGWHCLGPVKNFSDGKPHSVNIFGTKLVVFADSKGELNVLDAYCRHMGGDLSKGTVKGDEVACPFHDWRWGGDGKCKLVPYAKRTPRLARTRSWHTDVRGGLLFVWHDHEGNPPQPEVRIPEIPEWHSGEWTDWKWNSMLIEGSNCREIIDNVTDMAHFFYIHFGLPTYFKNVFEGHIASQYLHNVGRPDVNDLGTAYGEAKLDSEASYFGPSFMINWLHNTYGEFKAESILINCHYPVTQDSFVLQWGVIVEKPKGLDDATTEKLADAFTEGVSKGFLQDVEIWKHKTRIDNPLLVEEDGAVYQMRRWYQQFYVDVADITPDMTDRFEMEVDTTAAVEKWNIEVQENLKAQAEAEKAEQSS.

Residues 24 to 126 enclose the Rieske domain; the sequence is WHCLGPVKNF…TDVRGGLLFV (103 aa). Cysteine 65, histidine 67, cysteine 84, and histidine 87 together coordinate [2Fe-2S] cluster. Asparagine 173, histidine 179, histidine 184, and aspartate 302 together coordinate Fe cation.

In terms of assembly, homotrimer. The two-component system 3-ketosteroid-9-alpha-monooxygenase is composed of an oxygenase component KshA and a reductase component KshB. [2Fe-2S] cluster is required as a cofactor. Requires Fe cation as cofactor.

The enzyme catalyses androsta-1,4-diene-3,17-dione + 2 reduced [2Fe-2S]-[ferredoxin] + O2 + 2 H(+) = 9alpha-hydroxyandrosta-1,4-diene-3,17-dione + 2 oxidized [2Fe-2S]-[ferredoxin] + H2O. The protein operates within lipid metabolism; steroid biosynthesis. Functionally, involved in the degradation of cholesterol. Catalyzes the introduction of a 9a-hydroxyl moiety into 1,4-androstadiene-3,17-dione (ADD) to yield the 9alpha-hydroxy-1,4-androstadiene-3,17-dione (9OHADD) intermediate which spontaneously form 3-hydroxy-9,10-seconandrost-1,3,5(10)-triene-9,17-dione (HSA) via the meta-cleavage of ring B with concomitant aromatization of ring A. The protein is 3-ketosteroid-9-alpha-monooxygenase, oxygenase component (kshA) of Mycolicibacterium smegmatis (strain ATCC 700084 / mc(2)155) (Mycobacterium smegmatis).